The chain runs to 365 residues: Putrescine carbamoyltransferase (365 aa).

Residues 54–58 (STRTR), arginine 105, and histidine 132 each bind carbamoyl phosphate. 277–280 (HCLP) provides a ligand contact to putrescine.

It belongs to the aspartate/ornithine carbamoyltransferase superfamily. PTCase family. As to quaternary structure, homotrimer.

Its subcellular location is the cytoplasm. The catalysed reaction is carbamoyl phosphate + putrescine = N-carbamoylputrescine + phosphate + H(+). It participates in amine and polyamine biosynthesis; putrescine biosynthesis via agmatine pathway; putrescine from N-carbamoylputrescine (transferase route): step 1/1. Functionally, catalyzes the phosphorolysis of N-carbamoylputrescine to form carbamoyl phosphate and putrescine. Is involved in the degradation pathway of the polyamine agmatine. This is Putrescine carbamoyltransferase from Mycoplasma mycoides subsp. mycoides SC (strain CCUG 32753 / NCTC 10114 / PG1).